We begin with the raw amino-acid sequence, 113 residues long: Transcriptional activator RamA (113 aa).

One can recognise an HTH araC/xylS-type domain in the interval 9–107 (DTIVEWIDDN…HQPPGAYRKE (99 aa)). 2 consecutive DNA-binding regions (H-T-H motif) follow at residues 26–47 (EDIA…LQYK) and 74–97 (VYEI…TRTF).

Probable transcriptional activator. This Enterobacter cloacae protein is Transcriptional activator RamA (ramA).